The chain runs to 201 residues: ATP-dependent Clp protease proteolytic subunit (201 aa).

S97 acts as the Nucleophile in catalysis. H122 is an active-site residue.

Belongs to the peptidase S14 family. As to quaternary structure, fourteen ClpP subunits assemble into 2 heptameric rings which stack back to back to give a disk-like structure with a central cavity, resembling the structure of eukaryotic proteasomes.

Its subcellular location is the cytoplasm. It carries out the reaction Hydrolysis of proteins to small peptides in the presence of ATP and magnesium. alpha-casein is the usual test substrate. In the absence of ATP, only oligopeptides shorter than five residues are hydrolyzed (such as succinyl-Leu-Tyr-|-NHMec, and Leu-Tyr-Leu-|-Tyr-Trp, in which cleavage of the -Tyr-|-Leu- and -Tyr-|-Trp bonds also occurs).. In terms of biological role, cleaves peptides in various proteins in a process that requires ATP hydrolysis. Has a chymotrypsin-like activity. Plays a major role in the degradation of misfolded proteins. The polypeptide is ATP-dependent Clp protease proteolytic subunit (Nitratidesulfovibrio vulgaris (strain DSM 19637 / Miyazaki F) (Desulfovibrio vulgaris)).